The sequence spans 406 residues: 4-hydroxy-3-methylbut-2-en-1-yl diphosphate synthase (ferredoxin) (406 aa).

[4Fe-4S] cluster-binding residues include Cys-314, Cys-317, Cys-348, and Glu-355.

Belongs to the IspG family. The cofactor is [4Fe-4S] cluster.

It catalyses the reaction (2E)-4-hydroxy-3-methylbut-2-enyl diphosphate + 2 oxidized [2Fe-2S]-[ferredoxin] + H2O = 2-C-methyl-D-erythritol 2,4-cyclic diphosphate + 2 reduced [2Fe-2S]-[ferredoxin] + H(+). Its pathway is isoprenoid biosynthesis; isopentenyl diphosphate biosynthesis via DXP pathway; isopentenyl diphosphate from 1-deoxy-D-xylulose 5-phosphate: step 5/6. Its function is as follows. Converts 2C-methyl-D-erythritol 2,4-cyclodiphosphate (ME-2,4cPP) into 1-hydroxy-2-methyl-2-(E)-butenyl 4-diphosphate. This chain is 4-hydroxy-3-methylbut-2-en-1-yl diphosphate synthase (ferredoxin), found in Prochlorococcus marinus (strain MIT 9313).